Here is a 20-residue protein sequence, read N- to C-terminus: Unknown protein from 2D-PAGE of needles (20 aa).

The protein is Unknown protein from 2D-PAGE of needles of Pinus pinaster (Maritime pine).